Reading from the N-terminus, the 306-residue chain is Phosphatidylserine decarboxylase proenzyme (306 aa).

Catalysis depends on charge relay system; for autoendoproteolytic cleavage activity residues Asp98, His155, and Ser259. Residue Ser259 is the Schiff-base intermediate with substrate; via pyruvic acid; for decarboxylase activity of the active site. Ser259 is modified (pyruvic acid (Ser); by autocatalysis).

Belongs to the phosphatidylserine decarboxylase family. PSD-B subfamily. Prokaryotic type I sub-subfamily. In terms of assembly, heterodimer of a large membrane-associated beta subunit and a small pyruvoyl-containing alpha subunit. It depends on pyruvate as a cofactor. Post-translationally, is synthesized initially as an inactive proenzyme. Formation of the active enzyme involves a self-maturation process in which the active site pyruvoyl group is generated from an internal serine residue via an autocatalytic post-translational modification. Two non-identical subunits are generated from the proenzyme in this reaction, and the pyruvate is formed at the N-terminus of the alpha chain, which is derived from the carboxyl end of the proenzyme. The autoendoproteolytic cleavage occurs by a canonical serine protease mechanism, in which the side chain hydroxyl group of the serine supplies its oxygen atom to form the C-terminus of the beta chain, while the remainder of the serine residue undergoes an oxidative deamination to produce ammonia and the pyruvoyl prosthetic group on the alpha chain. During this reaction, the Ser that is part of the protease active site of the proenzyme becomes the pyruvoyl prosthetic group, which constitutes an essential element of the active site of the mature decarboxylase.

The protein resides in the cell membrane. The enzyme catalyses a 1,2-diacyl-sn-glycero-3-phospho-L-serine + H(+) = a 1,2-diacyl-sn-glycero-3-phosphoethanolamine + CO2. It functions in the pathway phospholipid metabolism; phosphatidylethanolamine biosynthesis; phosphatidylethanolamine from CDP-diacylglycerol: step 2/2. In terms of biological role, catalyzes the formation of phosphatidylethanolamine (PtdEtn) from phosphatidylserine (PtdSer). In Nitrosococcus oceani (strain ATCC 19707 / BCRC 17464 / JCM 30415 / NCIMB 11848 / C-107), this protein is Phosphatidylserine decarboxylase proenzyme.